The primary structure comprises 321 residues: Protein ZAR1-like (321 aa).

The disordered stretch occupies residues R110–R214. A compositionally biased stretch (basic and acidic residues) spans L145–S154. The 3CxxC-type zinc-finger motif lies at P222 to K307.

The protein belongs to the ZAR1 family. In terms of assembly, interacts with YBX2.

The protein localises to the cytoplasm. It is found in the cytoplasmic ribonucleoprotein granule. In terms of biological role, mRNA-binding protein required for maternal mRNA storage, translation and degradation during oocyte maturation. Probably promotes formation of some phase-separated membraneless compartment that stores maternal mRNAs in oocytes: acts by undergoing liquid-liquid phase separation upon binding to maternal mRNAs. Binds to the 3'-UTR of maternal mRNAs, inhibiting their translation. This is Protein ZAR1-like from Homo sapiens (Human).